Consider the following 274-residue polypeptide: 1D-myo-inositol 2-acetamido-2-deoxy-alpha-D-glucopyranoside deacetylase 2 (274 aa).

Positions 6, 9, and 140 each coordinate Zn(2+).

This sequence belongs to the MshB deacetylase family. The cofactor is Zn(2+).

It catalyses the reaction 1D-myo-inositol 2-acetamido-2-deoxy-alpha-D-glucopyranoside + H2O = 1D-myo-inositol 2-amino-2-deoxy-alpha-D-glucopyranoside + acetate. Its function is as follows. Catalyzes the deacetylation of 1D-myo-inositol 2-acetamido-2-deoxy-alpha-D-glucopyranoside (GlcNAc-Ins) in the mycothiol biosynthesis pathway. In Saccharopolyspora erythraea (strain ATCC 11635 / DSM 40517 / JCM 4748 / NBRC 13426 / NCIMB 8594 / NRRL 2338), this protein is 1D-myo-inositol 2-acetamido-2-deoxy-alpha-D-glucopyranoside deacetylase 2.